Here is a 384-residue protein sequence, read N- to C-terminus: 8-amino-7-oxononanoate synthase (384 aa).

Arg21 is a substrate binding site. A pyridoxal 5'-phosphate-binding site is contributed by 108–109; the sequence is GF. A substrate-binding site is contributed by His133. Positions 179, 207, and 233 each coordinate pyridoxal 5'-phosphate. Lys236 carries the post-translational modification N6-(pyridoxal phosphate)lysine. A substrate-binding site is contributed by Thr352.

It belongs to the class-II pyridoxal-phosphate-dependent aminotransferase family. BioF subfamily. As to quaternary structure, homodimer. Pyridoxal 5'-phosphate serves as cofactor.

The enzyme catalyses 6-carboxyhexanoyl-[ACP] + L-alanine + H(+) = (8S)-8-amino-7-oxononanoate + holo-[ACP] + CO2. It functions in the pathway cofactor biosynthesis; biotin biosynthesis. In terms of biological role, catalyzes the decarboxylative condensation of pimeloyl-[acyl-carrier protein] and L-alanine to produce 8-amino-7-oxononanoate (AON), [acyl-carrier protein], and carbon dioxide. This Escherichia fergusonii (strain ATCC 35469 / DSM 13698 / CCUG 18766 / IAM 14443 / JCM 21226 / LMG 7866 / NBRC 102419 / NCTC 12128 / CDC 0568-73) protein is 8-amino-7-oxononanoate synthase.